Here is a 182-residue protein sequence, read N- to C-terminus: NADH-quinone oxidoreductase subunit I (182 aa).

4Fe-4S ferredoxin-type domains follow at residues 52–82 and 92–121; these read LTRD…LQKA and DFFR…LTPD. 8 residues coordinate [4Fe-4S] cluster: C62, C65, C68, C72, C101, C104, C107, and C111.

It belongs to the complex I 23 kDa subunit family. In terms of assembly, NDH-1 is composed of 13 different subunits. Subunits NuoA, H, J, K, L, M, N constitute the membrane sector of the complex. Requires [4Fe-4S] cluster as cofactor.

It is found in the cell inner membrane. The catalysed reaction is a quinone + NADH + 5 H(+)(in) = a quinol + NAD(+) + 4 H(+)(out). NDH-1 shuttles electrons from NADH, via FMN and iron-sulfur (Fe-S) centers, to quinones in the respiratory chain. The immediate electron acceptor for the enzyme in this species is believed to be ubiquinone. Couples the redox reaction to proton translocation (for every two electrons transferred, four hydrogen ions are translocated across the cytoplasmic membrane), and thus conserves the redox energy in a proton gradient. The sequence is that of NADH-quinone oxidoreductase subunit I from Pseudomonas fluorescens (strain Pf0-1).